Reading from the N-terminus, the 80-residue chain is Gamma-conotoxin-like Am6.6 (80 aa).

The N-terminal stretch at 1–19 (MEKLTILLLVAAILMSTQA) is a signal peptide. Positions 20 to 45 (LNQEQRQQAKINLLSKKKPSAERWRR) are excised as a propeptide. Intrachain disulfides connect cysteine 47/cysteine 61, cysteine 54/cysteine 65, and cysteine 60/cysteine 70. Glutamate 56 and glutamate 59 each carry 4-carboxyglutamate. Glutamate 71 bears the 4-carboxyglutamate mark. Proline 76 is subject to 4-hydroxyproline. A propeptide spanning residues 78–80 (RAI) is cleaved from the precursor.

This sequence belongs to the conotoxin O2 family. In terms of tissue distribution, expressed by the venom duct.

It is found in the secreted. Its function is as follows. Gamma-conotoxins may act on voltage-gated non-specific cation pacemaker channels (HCN). The protein is Gamma-conotoxin-like Am6.6 of Conus amadis (Amadis cone).